The chain runs to 317 residues: Lipoyl synthase (317 aa).

[4Fe-4S] cluster contacts are provided by cysteine 55, cysteine 60, cysteine 66, cysteine 81, cysteine 85, cysteine 88, and serine 292. One can recognise a Radical SAM core domain in the interval 67 to 281 (WEDREATFLI…ERYATEIGFA (215 aa)).

Belongs to the radical SAM superfamily. Lipoyl synthase family. Requires [4Fe-4S] cluster as cofactor.

It is found in the cytoplasm. The enzyme catalyses [[Fe-S] cluster scaffold protein carrying a second [4Fe-4S](2+) cluster] + N(6)-octanoyl-L-lysyl-[protein] + 2 oxidized [2Fe-2S]-[ferredoxin] + 2 S-adenosyl-L-methionine + 4 H(+) = [[Fe-S] cluster scaffold protein] + N(6)-[(R)-dihydrolipoyl]-L-lysyl-[protein] + 4 Fe(3+) + 2 hydrogen sulfide + 2 5'-deoxyadenosine + 2 L-methionine + 2 reduced [2Fe-2S]-[ferredoxin]. The protein operates within protein modification; protein lipoylation via endogenous pathway; protein N(6)-(lipoyl)lysine from octanoyl-[acyl-carrier-protein]: step 2/2. Functionally, catalyzes the radical-mediated insertion of two sulfur atoms into the C-6 and C-8 positions of the octanoyl moiety bound to the lipoyl domains of lipoate-dependent enzymes, thereby converting the octanoylated domains into lipoylated derivatives. The chain is Lipoyl synthase from Mycolicibacterium gilvum (strain PYR-GCK) (Mycobacterium gilvum (strain PYR-GCK)).